The sequence spans 723 residues: Threonine--tRNA ligase 1, cytoplasmic (723 aa).

The segment at 1 to 46 (MFEEKASSPSGKMGGEEKPIGAGEEKQKEGGKKKNKEGSGDGGRAE) is disordered. Basic and acidic residues predominate over residues 14-39 (GGEEKPIGAGEEKQKEGGKKKNKEGS). Residue serine 39 is modified to Phosphoserine. A TGS domain is found at 79 to 143 (DSKPIKVTLP…EEDCTLELLK (65 aa)). Lysine 243 carries the post-translational modification N6-acetyllysine. At threonine 246 the chain carries Phosphothreonine. Tyrosine 298 carries the phosphotyrosine modification. Threonine 453 is modified (phosphothreonine). At serine 702 the chain carries Phosphoserine.

The protein belongs to the class-II aminoacyl-tRNA synthetase family. In terms of assembly, homodimer. In terms of processing, ISGylated.

The protein resides in the cytoplasm. It catalyses the reaction tRNA(Thr) + L-threonine + ATP = L-threonyl-tRNA(Thr) + AMP + diphosphate + H(+). Its activity is regulated as follows. Inhibited by borrelidin (BN, IC 50 is 7 nM), which binds to 4 distinct subsites in the protein, preventing binding of all 3 substrates. Functionally, catalyzes the attachment of threonine to tRNA(Thr) in a two-step reaction: threonine is first activated by ATP to form Thr-AMP and then transferred to the acceptor end of tRNA(Thr). Also edits incorrectly charged tRNA(Thr) via its editing domain, at the post-transfer stage. This Homo sapiens (Human) protein is Threonine--tRNA ligase 1, cytoplasmic.